The sequence spans 558 residues: MAALTQNPQFKKLQTWYHEHRSDLNLRRLFEGDKDRFNHFSLNLNTNHGRILLDYSKNLVTEAVMQMLVDLAKSRGVEAARERMFNGEKINFTEDRAVLHVALRNRSNTPILVDGKDVMPEVNRVLEKMKSFCKRVRSGEWKGYSGKSITDVINIGIGGSDLGPLMVTEALKPYSAEGPRVWFVSNIDGTHIAKTLATLNPESSLFIIASKTFTTQETITNAETAKEWFLQSAKDPSAVAKHFVALSTNTTKVKEFGIDPQNMFEFWDWVGGRYSLWSAIGLSIALHVGFDNFEQLLSGAHWMDQHFRTTPLEKNAPVLLALLGIWYINFFGCETHAMLPYDQYLHRFAAYFQQGDMESNGKYITKSGTRVDHQTGPIVWGEPGTNGQHAFYQLIHQGTKMIPCDFLIPVQTQHPIRKGLHHKILLANFLAQTEALMKGKSTEEARKELQAAGKSPEDFEKLLPHKVFEGNRPTNSIVFTKLTPFILGALIAMYEHKIFVQGVIWDINSFDQWGVELGKQLAKKIEPELDGSSPVTSHDSSTNGLINFIKQEREARSQ.

Ala-2 carries the post-translational modification N-acetylalanine. An N6-acetyllysine modification is found at Lys-12. Lys-34 is subject to N6-(2-hydroxyisobutyryl)lysine. Position 107 is a phosphoserine (Ser-107). Phosphothreonine is present on Thr-109. Residue Lys-142 is modified to N6-acetyllysine. A D-glucose 6-phosphate-binding site is contributed by 159–160 (GS). Ser-185 is modified (phosphoserine; by CK2). 210-215 (SKTFTT) serves as a coordination point for D-glucose 6-phosphate. Position 250 is a phosphothreonine (Thr-250). D-glucose 6-phosphate-binding residues include Gln-354, Glu-358, and His-389. The Proton donor role is filled by Glu-358. The active site involves His-389. Residue Lys-454 is modified to N6-acetyllysine; alternate. Position 454 is an N6-malonyllysine; alternate (Lys-454). N6-succinyllysine; alternate is present on Lys-454. Ser-455 bears the Phosphoserine mark. Residue Lys-519 participates in D-glucose 6-phosphate binding. Residue Lys-519 is part of the active site.

It belongs to the GPI family. Homodimer in the catalytically active form, monomer in the secreted form. Phosphorylation at Ser-185 by CK2 has been shown to decrease enzymatic activity and may contribute to secretion by a non-classical secretory pathway. In terms of processing, ISGylated.

It localises to the cytoplasm. Its subcellular location is the secreted. It catalyses the reaction alpha-D-glucose 6-phosphate = beta-D-fructose 6-phosphate. The protein operates within carbohydrate degradation; glycolysis; D-glyceraldehyde 3-phosphate and glycerone phosphate from D-glucose: step 2/4. Functionally, in the cytoplasm, catalyzes the conversion of glucose-6-phosphate to fructose-6-phosphate, the second step in glycolysis, and the reverse reaction during gluconeogenesis. Besides it's role as a glycolytic enzyme, also acts as a secreted cytokine: acts as an angiogenic factor (AMF) that stimulates endothelial cell motility. Acts as a neurotrophic factor, neuroleukin, for spinal and sensory neurons. It is secreted by lectin-stimulated T-cells and induces immunoglobulin secretion. This Sus scrofa (Pig) protein is Glucose-6-phosphate isomerase.